The primary structure comprises 287 residues: MTMMDMNFKYCHKIMKKHSKSFSYAFDLLPEDQRKAVWAIYAVCRKIDDSIDVYGDIQFLNQIKEDIQSIEKYPYEHHHFQSDRRIMMALQHVAQHKNIAFQSFYNLIDTVYKDQHFTMFETDAELFGYCYGVAGTVGEVLTPILSDHETHQTYDVARRLGESLQLINILRDVGEDFENERIYFSKQRLKQYEVDIAEVYQNGVNNHYIDLWEYYAAIAEKDFRDVMDQIKVFSIEAQPIIELAARIYIEILDEVRQASYTLHERVFVYKRKKAKLFHEINSKYHRI.

Residues 18–21 (HSKS), Y41, and R45 each bind (2E,6E)-farnesyl diphosphate. Mg(2+)-binding residues include D48 and D52. Residue Q165 participates in (2E,6E)-farnesyl diphosphate binding. N168 provides a ligand contact to Mg(2+). Residue R171 participates in (2E,6E)-farnesyl diphosphate binding. Residue D172 coordinates Mg(2+). A (2E,6E)-farnesyl diphosphate-binding site is contributed by Y248.

Belongs to the phytoene/squalene synthase family. CrtM subfamily. Mg(2+) serves as cofactor.

The catalysed reaction is 2 (2E,6E)-farnesyl diphosphate = 15-cis-4,4'-diapophytoene + 2 diphosphate. Its pathway is carotenoid biosynthesis; staphyloxanthin biosynthesis; staphyloxanthin from farnesyl diphosphate: step 1/5. Functionally, involved in the biosynthesis of the yellow-orange carotenoid staphyloxanthin, which plays a role in the virulence via its protective function against oxidative stress. Catalyzes the head-to-head condensation of two molecules of farnesyl diphosphate (FPP) into the colorless C(30) carotenoid 4,4'-diapophytoene (dehydrosqualene). The protein is 4,4'-diapophytoene synthase (crtM) of Staphylococcus aureus (strain bovine RF122 / ET3-1).